The chain runs to 122 residues: Large ribosomal subunit protein uL14c (122 aa).

This sequence belongs to the universal ribosomal protein uL14 family. As to quaternary structure, part of the 50S ribosomal subunit.

The protein localises to the plastid. Its function is as follows. Binds to 23S rRNA. In Helicosporidium sp. subsp. Simulium jonesii (Green alga), this protein is Large ribosomal subunit protein uL14c (rpl14).